A 339-amino-acid polypeptide reads, in one-letter code: Phenylalanine--tRNA ligase alpha subunit (339 aa).

A Mg(2+)-binding site is contributed by E254.

The protein belongs to the class-II aminoacyl-tRNA synthetase family. Phe-tRNA synthetase alpha subunit type 1 subfamily. In terms of assembly, tetramer of two alpha and two beta subunits. Mg(2+) serves as cofactor.

It is found in the cytoplasm. It catalyses the reaction tRNA(Phe) + L-phenylalanine + ATP = L-phenylalanyl-tRNA(Phe) + AMP + diphosphate + H(+). This Chlamydia pneumoniae (Chlamydophila pneumoniae) protein is Phenylalanine--tRNA ligase alpha subunit (pheS).